The following is a 195-amino-acid chain: UPF0301 protein CCNA_03506 (195 aa).

Belongs to the UPF0301 (AlgH) family.

The protein is UPF0301 protein CCNA_03506 of Caulobacter vibrioides (strain NA1000 / CB15N) (Caulobacter crescentus).